The following is a 325-amino-acid chain: Elongation factor P--(R)-beta-lysine ligase (325 aa).

76–78 (SPE) is a binding site for substrate. ATP contacts are provided by residues 100 to 102 (RNE) and Asn-109. Tyr-118 contacts substrate. 244–245 (EL) contributes to the ATP binding site. Glu-251 provides a ligand contact to substrate. Gly-300 contacts ATP.

Belongs to the class-II aminoacyl-tRNA synthetase family. EpmA subfamily. In terms of assembly, homodimer.

It catalyses the reaction D-beta-lysine + L-lysyl-[protein] + ATP = N(6)-((3R)-3,6-diaminohexanoyl)-L-lysyl-[protein] + AMP + diphosphate + H(+). In terms of biological role, with EpmB is involved in the beta-lysylation step of the post-translational modification of translation elongation factor P (EF-P). Catalyzes the ATP-dependent activation of (R)-beta-lysine produced by EpmB, forming a lysyl-adenylate, from which the beta-lysyl moiety is then transferred to the epsilon-amino group of a conserved specific lysine residue in EF-P. This is Elongation factor P--(R)-beta-lysine ligase from Pectobacterium carotovorum subsp. carotovorum (strain PC1).